Reading from the N-terminus, the 213-residue chain is Large ribosomal subunit protein uL3 (213 aa).

The disordered stretch occupies residues Gly131–Asp168.

It belongs to the universal ribosomal protein uL3 family. In terms of assembly, part of the 50S ribosomal subunit. Forms a cluster with proteins L14 and L19.

In terms of biological role, one of the primary rRNA binding proteins, it binds directly near the 3'-end of the 23S rRNA, where it nucleates assembly of the 50S subunit. This Synechococcus elongatus (strain ATCC 33912 / PCC 7942 / FACHB-805) (Anacystis nidulans R2) protein is Large ribosomal subunit protein uL3.